A 359-amino-acid polypeptide reads, in one-letter code: MKAATAYINTDALTHNIRQLHLQAPNSKLLAVVKANGYGHGLLHVAKSLPDADAFGVARIEEALTLRAGGVVKPILLLEGFYGASDLPVIVTNNIHTVVHSIEQLEALESAELDNQAVVWLKIDTGMHRLGVRPEQLDDVVQRLHACDNVAKPLRYMSHFGCADDLASNVTNQQINTFLSLTEGCRGERSLAASAGILAWPDSQLEWIRPGIIMYGVSPFTEPDRSAEAFNMQPVMTLTSSLIAVRDVKEGEQVGYGGIWTSERDTKVGVIAIGYGDGYPRTAPNGTPVLVNGRIVPMAGRVSMDMLTVDLGPNAQDKVGDEAILWGNGLPAEVVAEHIGTIAYELVTKLTSRVDMTYL.

The active-site Proton acceptor; specific for D-alanine is the lysine 34. Lysine 34 is modified (N6-(pyridoxal phosphate)lysine). Arginine 129 contacts substrate. Tyrosine 256 serves as the catalytic Proton acceptor; specific for L-alanine. Methionine 304 provides a ligand contact to substrate.

The protein belongs to the alanine racemase family. It depends on pyridoxal 5'-phosphate as a cofactor.

It catalyses the reaction L-alanine = D-alanine. Its pathway is amino-acid biosynthesis; D-alanine biosynthesis; D-alanine from L-alanine: step 1/1. Catalyzes the interconversion of L-alanine and D-alanine. May also act on other amino acids. The protein is Alanine racemase (alr) of Photobacterium profundum (strain SS9).